The chain runs to 323 residues: Probable cell division protein WhiA (323 aa).

A DNA-binding region (H-T-H motif) is located at residues 275–309 (TLKELGEMLTTGQVSKSGINHRLRKLDQIAERLRS).

The protein belongs to the WhiA family.

In terms of biological role, involved in cell division and chromosome segregation. This Listeria monocytogenes serotype 4b (strain CLIP80459) protein is Probable cell division protein WhiA.